A 291-amino-acid chain; its full sequence is rRNA 2'-O-methyltransferase fibrillarin (291 aa).

2 stretches are compositionally biased toward basic and acidic residues: residues 1–12 (MKKTNKRPDGRK) and 20–29 (FRSDKGEGRG). The interval 1–45 (MKKTNKRPDGRKFQKGGKPFRSDKGEGRGRMNNKKKGSVNAGLDR) is disordered. Arg28 and Arg62 each carry asymmetric dimethylarginine. Residues 134-135 (TT), 153-154 (EF), 178-179 (DA), and 198-201 (DVSQ) contribute to the S-adenosyl-L-methionine site.

It belongs to the methyltransferase superfamily. Fibrillarin family. In terms of assembly, component of box C/D small nucleolar ribonucleoprotein (snoRNP) particles.

It is found in the nucleus. The protein localises to the nucleolus. It carries out the reaction L-glutaminyl-[histone H2A] + S-adenosyl-L-methionine = N(5)-methyl-L-glutaminyl-[histone H2A] + S-adenosyl-L-homocysteine + H(+). S-adenosyl-L-methionine-dependent methyltransferase that has the ability to methylate both RNAs and proteins. Involved in pre-rRNA processing. Utilizes the methyl donor S-adenosyl-L-methionine to catalyze the site-specific 2'-hydroxyl methylation of ribose moieties in pre-ribosomal RNA. Site specificity is provided by a guide RNA that base pairs with the substrate. Methylation occurs at a characteristic distance from the sequence involved in base pairing with the guide RNA. Also acts as a protein methyltransferase by mediating methylation of 'Gln-105' of histone H2A (H2AQ105me), a modification that impairs binding of the FACT complex and is specifically present at 35S ribosomal DNA locus. In Encephalitozoon cuniculi (strain GB-M1) (Microsporidian parasite), this protein is rRNA 2'-O-methyltransferase fibrillarin (NOP1).